The sequence spans 405 residues: G1/S-specific cyclin-D (405 aa).

The 125-residue stretch at 76 to 200 folds into the Cyclin N-terminal domain; the sequence is FYNCMEYEEA…LIVTTLQWET (125 aa). Positions 301 to 405 are disordered; that stretch reads YTSEDAEKTE…STPPKIFKTL (105 aa). Residues 311–321 show a composition bias toward polar residues; the sequence is PTPSAPASTQE. The span at 326-335 shows a compositional bias: basic and acidic residues; it reads QELKELKEEP. Residues 358 to 380 show a composition bias toward polar residues; sequence SEQTPSTPLNDSGFSSDVSSPAS.

This sequence belongs to the cyclin family. Cyclin D subfamily. In terms of assembly, interacts with cdk-4; the interaction is likely involved in regulating cdk-4 activity.

Functionally, in association with cdk-4, regulates the progression through the G1 phase of the cell cycle during postembryonic development. Regulates proliferation of the coelomocyte lineage and intestinal cells during late embryogenesis. In complex with cdk-4, involved in sex determination during gonadogenesis by regulating the asymmetric division of the somatic gonadal precursor cell (SGP). The polypeptide is G1/S-specific cyclin-D (Caenorhabditis elegans).